A 111-amino-acid polypeptide reads, in one-letter code: Large ribosomal subunit protein uL22 (111 aa).

The protein belongs to the universal ribosomal protein uL22 family. As to quaternary structure, part of the 50S ribosomal subunit.

This protein binds specifically to 23S rRNA; its binding is stimulated by other ribosomal proteins, e.g. L4, L17, and L20. It is important during the early stages of 50S assembly. It makes multiple contacts with different domains of the 23S rRNA in the assembled 50S subunit and ribosome. Functionally, the globular domain of the protein is located near the polypeptide exit tunnel on the outside of the subunit, while an extended beta-hairpin is found that lines the wall of the exit tunnel in the center of the 70S ribosome. The polypeptide is Large ribosomal subunit protein uL22 (Xanthomonas oryzae pv. oryzae (strain PXO99A)).